The chain runs to 284 residues: Tropomyosin (284 aa).

The disordered stretch occupies residues 1–41; the sequence is MDAIKKKMQAMKLEKDNAVDRAETAEQQSRDAALRAEKAEE. A coiled-coil region spans residues 1 to 284; that stretch reads MDAIKKKMQA…DQTFSELTGY (284 aa). Residues 12–41 are compositionally biased toward basic and acidic residues; that stretch reads KLEKDNAVDRAETAEQQSRDAALRAEKAEE.

The protein belongs to the tropomyosin family. In terms of assembly, homodimer.

Tropomyosin, in association with the troponin complex, plays a central role in the calcium dependent regulation of muscle contraction. This Haemaphysalis longicornis (Bush tick) protein is Tropomyosin.